The sequence spans 892 residues: DNA mismatch repair protein MutS (892 aa).

Residues 663–684 (TNTSLREAAPTTTLSTSDQGQM) form a disordered region. 696–703 (GPNASGKS) lines the ATP pocket.

This sequence belongs to the DNA mismatch repair MutS family.

Functionally, this protein is involved in the repair of mismatches in DNA. It is possible that it carries out the mismatch recognition step. This protein has a weak ATPase activity. The protein is DNA mismatch repair protein MutS of Nostoc punctiforme (strain ATCC 29133 / PCC 73102).